A 393-amino-acid chain; its full sequence is tRNA(Met) cytidine acetate ligase (393 aa).

Residues G81, N142, and R167 each coordinate ATP.

The protein belongs to the TmcAL family.

It localises to the cytoplasm. The enzyme catalyses cytidine(34) in elongator tRNA(Met) + acetate + ATP = N(4)-acetylcytidine(34) in elongator tRNA(Met) + AMP + diphosphate. In terms of biological role, catalyzes the formation of N(4)-acetylcytidine (ac(4)C) at the wobble position of elongator tRNA(Met), using acetate and ATP as substrates. First activates an acetate ion to form acetyladenylate (Ac-AMP) and then transfers the acetyl group to tRNA to form ac(4)C34. This is tRNA(Met) cytidine acetate ligase from Bacillus cereus (strain Q1).